Here is a 1114-residue protein sequence, read N- to C-terminus: Lysylphosphatidylglycerol biosynthesis bifunctional protein LysX (1114 aa).

Basic and acidic residues predominate over residues 1 to 11 (MSASTETHHAS). The tract at residues 1–26 (MSASTETHHASEAAVPTAPRPRPGLG) is disordered. A phosphatidylglycerol lysyltransferase region spans residues 1 to 618 (MSASTETHHA…GLHSDGSAPG (618 aa)). The next 6 helical transmembrane spans lie at 38 to 58 (IAGL…ISPV), 77 to 97 (APDT…ALAS), 101 to 121 (IAWW…VIVS), 126 to 146 (NVNA…LIAA), 164 to 184 (GVLI…VELF), and 219 to 239 (FVNT…VITL). The segment at 619–1114 (EGLAPTATGP…LAFPLAKPRQ (496 aa)) is lysine--tRNA ligase. The OB DNA-binding region spans 674–751 (VRIAGRLLRI…LSLLANEWRM (78 aa)). Positions 1025 and 1032 each coordinate Mg(2+).

It in the N-terminal section; belongs to the LPG synthetase family. This sequence in the C-terminal section; belongs to the class-II aminoacyl-tRNA synthetase family. The cofactor is Mg(2+).

The protein localises to the cell membrane. It carries out the reaction tRNA(Lys) + L-lysine + ATP = L-lysyl-tRNA(Lys) + AMP + diphosphate. The catalysed reaction is L-lysyl-tRNA(Lys) + a 1,2-diacyl-sn-glycero-3-phospho-(1'-sn-glycerol) = a 1,2-diacyl-sn-glycero-3-phospho-1'-(3'-O-L-lysyl)-sn-glycerol + tRNA(Lys). In terms of biological role, catalyzes the production of L-lysyl-tRNA(Lys)transfer and the transfer of a lysyl group from L-lysyl-tRNA(Lys) to membrane-bound phosphatidylglycerol (PG), which produces lysylphosphatidylglycerol (LPG), one of the components of the bacterial membrane with a positive net charge. LPG synthesis contributes to the resistance to cationic antimicrobial peptides (CAMPs) and likely protects M.tuberculosis against the CAMPs produced by competiting microorganisms (bacteriocins). In fact, the modification of anionic phosphatidylglycerol with positively charged L-lysine results in repulsion of the peptides. The polypeptide is Lysylphosphatidylglycerol biosynthesis bifunctional protein LysX (lysX) (Rhodococcus jostii (strain RHA1)).